Here is a 1342-residue protein sequence, read N- to C-terminus: DNA-directed RNA polymerase subunit beta (1342 aa).

Belongs to the RNA polymerase beta chain family. The RNAP catalytic core consists of 2 alpha, 1 beta, 1 beta' and 1 omega subunit. When a sigma factor is associated with the core the holoenzyme is formed, which can initiate transcription.

The enzyme catalyses RNA(n) + a ribonucleoside 5'-triphosphate = RNA(n+1) + diphosphate. In terms of biological role, DNA-dependent RNA polymerase catalyzes the transcription of DNA into RNA using the four ribonucleoside triphosphates as substrates. This chain is DNA-directed RNA polymerase subunit beta, found in Yersinia pseudotuberculosis serotype O:1b (strain IP 31758).